The sequence spans 433 residues: Probable dipeptidase (433 aa).

Cysteine 20 is an active-site residue.

It belongs to the peptidase C69 family.

It catalyses the reaction an L-aminoacyl-L-amino acid + H2O = 2 an L-alpha-amino acid. This chain is Probable dipeptidase (pipD), found in Salmonella dublin.